The sequence spans 451 residues: MAEHGAPAPAIPNGGCAARLPGNKVTVVLGAQWGDEGKGKVVDLLAQDADIVCRCQGGNNAGHTVVVDSVEYDFHLLPSGIINPKVTAFIGNGVVIHLPGLFEETEKNLKKGKGLEGWEKRLVISDRAHIVFDFHQAADGIQEQQRQEQAGKNLGTTKKGIGPVYSSKAARSGLRMCDLVSDFDEFSERFKVLANQYKAIYPTLEIDIEGELKKLKAYMEKVKPMVKDGVYFMYEALHGPPKKILVEGANAALLDIDFGTYPFVTSSNCTVGGVCTGLGMPPQNVGEVYGVVKAYTTRVGIGAFPTEQDNEIGELLQMRGKEFGVTTGRKRRCGWLDLVQLRYAYMINGFTALALTKLDILDVFPEIKVGVAYKLDGEVIPHFPANHEVLSKVEVKYETLPGWDTDISNARTFDELPVNAQNYVRFIEMELGVPVKWIGVGKSRESMIQLF.

GTP-binding positions include 34 to 40 (GDEGKGK) and 62 to 64 (GHT). The Proton acceptor role is filled by Asp35. Residues Asp35 and Gly62 each contribute to the Mg(2+) site. Residue Asp35 participates in substrate binding. IMP contacts are provided by residues 35 to 38 (DEGK), 60 to 63 (NAGH), Thr157, Arg171, Asn250, Thr265, and Arg329. His63 (proton donor) is an active-site residue. 325–331 (VTTGRKR) is a substrate binding site. Residues Arg331, 357-359 (KLD), and 439-442 (GVGK) each bind GTP.

The protein belongs to the adenylosuccinate synthetase family. Homodimer. It depends on Mg(2+) as a cofactor.

It is found in the cytoplasm. It localises to the mitochondrion. It carries out the reaction IMP + L-aspartate + GTP = N(6)-(1,2-dicarboxyethyl)-AMP + GDP + phosphate + 2 H(+). It functions in the pathway purine metabolism; AMP biosynthesis via de novo pathway; AMP from IMP: step 1/2. Inhibited competitively by AMP and IMP and non-competitively by fructose 1,6-bisphosphate. Functionally, plays an important role in the de novo pathway and in the salvage pathway of purine nucleotide biosynthesis. Catalyzes the first committed step in the biosynthesis of AMP from IMP. The polypeptide is Adenylosuccinate synthetase isozyme 2 (Gallus gallus (Chicken)).